The chain runs to 235 residues: Protein mxl-3 (235 aa).

The tract at residues 18–49 (EKQFRKRHHSDSSDDDSSSPKSASPSMDDDRR) is disordered. A basic motif region spans residues 47–60 (DRRAHHNELERRRR). One can recognise a bHLH domain in the interval 47–98 (DRRAHHNELERRRRDHIKDHFTILKDAIPLLDGEKSSRALILKRAVEFIHVM). A helix-loop-helix motif region spans residues 61-98 (DHIKDHFTILKDAIPLLDGEKSSRALILKRAVEFIHVM).

The protein belongs to the MAX family. In terms of assembly, may form homodimer. Interacts (via N-terminus) with skn-1 isoforms a and c. Expressed in the intestine and in the AWC sensory neurons.

It localises to the nucleus. It is found in the cytoplasm. Transcription factor which regulates the expression of genes involved in lipid metabolism in response to nutrient availability. Binds to the E-box motif 5'-CACGTG-3'. Under well-fed conditions, binds to the promoter and represses the expression of lipase genes lipl-1, lipl-2, lipl-3 and to a lesser extent lipl-5, thereby preventing lipolysis. In response to a high-glucose diet, promotes fatty acid synthesis, elongation and desaturation by up-regulating transcription factor sbp-1 expression. Under well-fed conditions, acts remotely in the intestine to up-regulate the expression of chemoreceptor srh-234 gene in the ADL sensory neuron, possibly by regulating the insulin signaling pathway. In Caenorhabditis elegans, this protein is Protein mxl-3.